A 570-amino-acid chain; its full sequence is Glycine--tRNA ligase (570 aa).

R99 and E165 together coordinate substrate. Residues 197-199 (RNE), 207-212 (LRLREF), 324-325 (EC), and 443-446 (GIDR) each bind ATP. Residue 212 to 216 (FSQAE) participates in substrate binding. Position 439–443 (439–443 (EPSFG)) interacts with substrate.

It belongs to the class-II aminoacyl-tRNA synthetase family.

It localises to the cytoplasm. It carries out the reaction tRNA(Gly) + glycine + ATP = glycyl-tRNA(Gly) + AMP + diphosphate. Catalyzes the attachment of glycine to tRNA(Gly). This Thermococcus sibiricus (strain DSM 12597 / MM 739) protein is Glycine--tRNA ligase.